The chain runs to 261 residues: Sepiapterin reductase (261 aa).

NADP(+) contacts are provided by residues 16-22 (GASRGFG), 44-45 (RT), and 71-72 (DL). Substrate-binding positions include 158-159 (SL) and Y171. K175 provides a ligand contact to NADP(+). G200 contacts substrate. 202–207 (LDTDMH) serves as a coordination point for NADP(+). D258 serves as a coordination point for substrate.

It belongs to the sepiapterin reductase family. Homodimer.

The protein localises to the cytoplasm. The enzyme catalyses L-erythro-7,8-dihydrobiopterin + NADP(+) = L-sepiapterin + NADPH + H(+). It catalyses the reaction (6R)-L-erythro-5,6,7,8-tetrahydrobiopterin + 2 NADP(+) = 6-pyruvoyl-5,6,7,8-tetrahydropterin + 2 NADPH + 2 H(+). Functionally, catalyzes the final one or two reductions in tetra-hydrobiopterin biosynthesis to form 5,6,7,8-tetrahydrobiopterin. This is Sepiapterin reductase (spr) from Xenopus tropicalis (Western clawed frog).